The primary structure comprises 310 residues: uncharacterized protein (310 aa).

At methionine 1–alanine 6 the chain is on the cytoplasmic side. The 65-residue stretch at lysine 5–glutamine 69 folds into the PQ-loop 1 domain. The helical transmembrane segment at alanine 7–isoleucine 27 threads the bilayer. The Extracellular portion of the chain corresponds to tyrosine 28–threonine 36. Residues glycine 37–phenylalanine 57 form a helical membrane-spanning segment. The Cytoplasmic segment spans residues cysteine 58–lysine 61. A helical transmembrane segment spans residues glycine 62–valine 82. The Extracellular portion of the chain corresponds to glutamine 83–lysine 96. The helical transmembrane segment at isoleucine 97–leucine 117 threads the bilayer. Residues tryptophan 118–aspartate 131 are Cytoplasmic-facing. Residues leucine 132–glutamate 152 traverse the membrane as a helical segment. Residues alanine 138 to leucine 194 enclose the PQ-loop 2 domain. Topologically, residues leucine 153–asparagine 164 are extracellular. Residues phenylalanine 165–glycine 185 form a helical membrane-spanning segment. The Cytoplasmic portion of the chain corresponds to asparagine 186–glycine 191. The helical transmembrane segment at isoleucine 192–tryptophan 212 threads the bilayer. Over tryptophan 213–valine 310 the chain is Extracellular. Residue serine 229 is modified to Phosphoserine. N-linked (GlcNAc...) asparagine glycans are attached at residues asparagine 251 and asparagine 259.

The protein resides in the cell membrane. This is an uncharacterized protein from Saccharomyces cerevisiae (strain ATCC 204508 / S288c) (Baker's yeast).